We begin with the raw amino-acid sequence, 105 residues long: Serine protease inhibitor Kazal-type 6 (105 aa).

The N-terminal stretch at 1–23 (MKVAGVFLLLSLALLCFFSGAFS) is a signal peptide. Pyrrolidone carboxylic acid is present on Gln24. Residues 49 to 105 (RLFQINCGEFRDPKVFCTRESDPLCGSDGQTYGNKCAFCKALEKSSGKINLKHRGKC) form the Kazal-like domain. Cystine bridges form between Cys55–Cys87, Cys65–Cys84, and Cys73–Cys105.

As to expression, expressed in the upper epidermis and in skin appendages.

It localises to the secreted. Its function is as follows. Serine protease inhibitor selective for kallikreins. Efficiently inhibits KLK5 and human KLK2, KLK4, KLK5, KLK6, KLK7, KLK12, KLK13 and KLK14. Doesn't inhibit human KLK1 and KLK8. The polypeptide is Serine protease inhibitor Kazal-type 6 (Spink6) (Mus musculus (Mouse)).